Reading from the N-terminus, the 258-residue chain is Methylthioribulose-1-phosphate dehydratase (258 aa).

A compositionally biased stretch (polar residues) spans 1-20 (MTPPSNGQAAETNDHLVQSD). The tract at residues 1-21 (MTPPSNGQAAETNDHLVQSDN) is disordered. Cys105 contacts substrate. The Zn(2+) site is built by His123 and His125. Glu153 functions as the Proton donor/acceptor in the catalytic mechanism. His210 provides a ligand contact to Zn(2+).

The protein belongs to the aldolase class II family. MtnB subfamily. Zn(2+) is required as a cofactor.

The protein localises to the cytoplasm. The catalysed reaction is 5-(methylsulfanyl)-D-ribulose 1-phosphate = 5-methylsulfanyl-2,3-dioxopentyl phosphate + H2O. The protein operates within amino-acid biosynthesis; L-methionine biosynthesis via salvage pathway; L-methionine from S-methyl-5-thio-alpha-D-ribose 1-phosphate: step 2/6. Functionally, catalyzes the dehydration of methylthioribulose-1-phosphate (MTRu-1-P) into 2,3-diketo-5-methylthiopentyl-1-phosphate (DK-MTP-1-P). This Chaetomium globosum (strain ATCC 6205 / CBS 148.51 / DSM 1962 / NBRC 6347 / NRRL 1970) (Soil fungus) protein is Methylthioribulose-1-phosphate dehydratase.